A 141-amino-acid polypeptide reads, in one-letter code: Hemoglobin subunit alpha (141 aa).

The Globin domain occupies 1-141; sequence VLSPADKTNI…VSTVLTSKYR (141 aa). Serine 3 carries the phosphoserine modification. Residue lysine 7 is modified to N6-succinyllysine. Phosphothreonine is present on threonine 8. N6-succinyllysine is present on lysine 11. The residue at position 16 (lysine 16) is an N6-acetyllysine; alternate. Position 16 is an N6-succinyllysine; alternate (lysine 16). Position 24 is a phosphotyrosine (tyrosine 24). Serine 35 bears the Phosphoserine mark. Lysine 40 bears the N6-succinyllysine mark. Position 49 is a phosphoserine (serine 49). Histidine 58 contributes to the O2 binding site. Histidine 87 lines the heme b pocket. Serine 102 carries the post-translational modification Phosphoserine. Threonine 108 carries the post-translational modification Phosphothreonine. At serine 124 the chain carries Phosphoserine. A phosphothreonine mark is found at threonine 134 and threonine 137. Serine 138 carries the phosphoserine modification.

Belongs to the globin family. In terms of assembly, heterotetramer of two alpha chains and two beta chains. Red blood cells.

Functionally, involved in oxygen transport from the lung to the various peripheral tissues. Its function is as follows. Hemopressin acts as an antagonist peptide of the cannabinoid receptor CNR1. Hemopressin-binding efficiently blocks cannabinoid receptor CNR1 and subsequent signaling. The sequence is that of Hemoglobin subunit alpha (HBA) from Canis lupus familiaris (Dog).